The following is a 271-amino-acid chain: tRNA pseudouridine synthase A (271 aa).

Residue Asp-54 is the Nucleophile of the active site. Position 112 (Tyr-112) interacts with substrate.

It belongs to the tRNA pseudouridine synthase TruA family. Homodimer.

It carries out the reaction uridine(38/39/40) in tRNA = pseudouridine(38/39/40) in tRNA. Functionally, formation of pseudouridine at positions 38, 39 and 40 in the anticodon stem and loop of transfer RNAs. This chain is tRNA pseudouridine synthase A, found in Acinetobacter baylyi (strain ATCC 33305 / BD413 / ADP1).